A 206-amino-acid chain; its full sequence is Large ribosomal subunit protein uL4 (206 aa).

The protein belongs to the universal ribosomal protein uL4 family. In terms of assembly, part of the 50S ribosomal subunit.

In terms of biological role, one of the primary rRNA binding proteins, this protein initially binds near the 5'-end of the 23S rRNA. It is important during the early stages of 50S assembly. It makes multiple contacts with different domains of the 23S rRNA in the assembled 50S subunit and ribosome. Functionally, forms part of the polypeptide exit tunnel. This Xanthobacter autotrophicus (strain ATCC BAA-1158 / Py2) protein is Large ribosomal subunit protein uL4.